The sequence spans 264 residues: Small ribosomal subunit protein eS1 (264 aa).

Residues 232–264 (HGEGGGSGKPSGDETGAKVERADGYEPPVQESV) are disordered. The span at 242–255 (SGDETGAKVERADG) shows a compositional bias: basic and acidic residues.

The protein belongs to the eukaryotic ribosomal protein eS1 family. In terms of assembly, component of the small ribosomal subunit. Mature ribosomes consist of a small (40S) and a large (60S) subunit. The 40S subunit contains about 33 different proteins and 1 molecule of RNA (18S). The 60S subunit contains about 49 different proteins and 3 molecules of RNA (28S, 5.8S and 5S). Part of the small subunit (SSU) processome, composed of more than 70 proteins and the RNA chaperone small nucleolar RNA (snoRNA) U3.

The protein localises to the cytoplasm. It localises to the nucleus. Its subcellular location is the nucleolus. Functionally, component of the small ribosomal subunit. The ribosome is a large ribonucleoprotein complex responsible for the synthesis of proteins in the cell. Part of the small subunit (SSU) processome, first precursor of the small eukaryotic ribosomal subunit. During the assembly of the SSU processome in the nucleolus, many ribosome biogenesis factors, an RNA chaperone and ribosomal proteins associate with the nascent pre-rRNA and work in concert to generate RNA folding, modifications, rearrangements and cleavage as well as targeted degradation of pre-ribosomal RNA by the RNA exosome. May play a role during erythropoiesis. The chain is Small ribosomal subunit protein eS1 from Ophiophagus hannah (King cobra).